We begin with the raw amino-acid sequence, 316 residues long: Olfactory receptor 10H4 (316 aa).

Residues 1–26 (MPSQNYSIISEFNLFGFSAFPQHLLP) lie on the Extracellular side of the membrane. N-linked (GlcNAc...) asparagine glycosylation occurs at Asn5. Residues 27 to 47 (ILFLLYLLMFLFTLLGNLLIM) form a helical membrane-spanning segment. The Cytoplasmic portion of the chain corresponds to 48 to 55 (ATIWIEHR). Residues 56 to 76 (LHTPMYLFLCTLSVSEILFTV) form a helical membrane-spanning segment. Residues 77-100 (AITPRMLADLLSTHHSITFVACAN) lie on the Extracellular side of the membrane. A disulfide bridge connects residues Cys98 and Cys190. A helical transmembrane segment spans residues 101 to 121 (QMFFSFMFGFTHSFLLLVMGY). At 122–140 (DRYVAICHPLRYNVLMSPR) the chain is on the cytoplasmic side. Residues 141–161 (DCAHLVACTWAGGSVMGMMVT) form a helical membrane-spanning segment. Topologically, residues 162–198 (TIVFHLTFCGSNVIHHFFCHVLSLLKLACENKTSSVI) are extracellular. The chain crosses the membrane as a helical span at residues 199–219 (MGVMLVCVTALIGCLFLIILS). Topologically, residues 220–239 (YVFIVAAILRIPSAEGRHKT) are cytoplasmic. A helical transmembrane segment spans residues 240-260 (FSTCVSHLTVVVTHYSFASFI). At 261 to 273 (YLKPKGLHSMYSD) the chain is on the extracellular side. A helical transmembrane segment spans residues 274 to 294 (ALMATTYTVFTPFLSPIIFSL). Topologically, residues 295-316 (RNKELKNAINKNFYRKFCPPSS) are cytoplasmic.

Belongs to the G-protein coupled receptor 1 family.

The protein localises to the cell membrane. Odorant receptor. This is Olfactory receptor 10H4 (OR10H4) from Homo sapiens (Human).